Here is a 123-residue protein sequence, read N- to C-terminus: Protein Wnt-7a (123 aa).

A lipid anchor (O-palmitoleoyl serine; by PORCN) is attached at Ser1. Residues 33–61 (VEPVRASRNKRPTFLKIKKPLSYRKPMDT) are disordered linker. Cys89 and Cys104 are oxidised to a cystine. Asn90 carries N-linked (GlcNAc...) asparagine glycosylation.

Belongs to the Wnt family. Forms a soluble 1:1 complex with AFM; this prevents oligomerization and is required for prolonged biological activity. The complex with AFM may represent the physiological form in body fluids. Interacts with FZD5. Interacts with PORCN. In terms of processing, palmitoleoylation is required for efficient binding to frizzled receptors. Depalmitoleoylation leads to Wnt signaling pathway inhibition.

The protein localises to the secreted. The protein resides in the extracellular space. It localises to the extracellular matrix. Functionally, ligand for members of the frizzled family of seven transmembrane receptors that functions in the canonical Wnt/beta-catenin signaling pathway. Plays an important role in embryonic development, including dorsal versus ventral patterning during limb development, skeleton development and urogenital tract development. Required for central nervous system (CNS) angiogenesis and blood-brain barrier regulation. The protein is Protein Wnt-7a (WNT7A) of Meleagris gallopavo (Wild turkey).